The primary structure comprises 241 residues: Probable transcriptional regulatory protein Reut_A2522 (241 aa).

Belongs to the TACO1 family.

It is found in the cytoplasm. The sequence is that of Probable transcriptional regulatory protein Reut_A2522 from Cupriavidus pinatubonensis (strain JMP 134 / LMG 1197) (Cupriavidus necator (strain JMP 134)).